The sequence spans 124 residues: Fluoride-specific ion channel FluC (124 aa).

A run of 4 helical transmembrane segments spans residues 4 to 24, 35 to 55, 62 to 82, and 95 to 115; these read LLFV…MSII, FGTL…YALG, PELK…FSTF, and WFKS…MVYL. Na(+) is bound by residues Gly74 and Thr77.

This sequence belongs to the fluoride channel Fluc/FEX (TC 1.A.43) family.

It localises to the cell inner membrane. The enzyme catalyses fluoride(in) = fluoride(out). With respect to regulation, na(+) is not transported, but it plays an essential structural role and its presence is essential for fluoride channel function. Functionally, fluoride-specific ion channel. Important for reducing fluoride concentration in the cell, thus reducing its toxicity. In Shewanella denitrificans (strain OS217 / ATCC BAA-1090 / DSM 15013), this protein is Fluoride-specific ion channel FluC.